Reading from the N-terminus, the 136-residue chain is MTTPCPCGRTSANSAKPAKTQPLPFFACCGPYLNESVPAPDAHALMRSRYSAFVLQRADYLLATWHASTRPAALDFAPGAKWLGLDVRSHRVLDADHAEVEFVARCREAGRATRLHERSRFVRESERWFYVDGDQF.

The protein belongs to the UPF0225 family.

The sequence is that of UPF0225 protein Pnap_0466 from Polaromonas naphthalenivorans (strain CJ2).